The sequence spans 448 residues: Dual specificity mitogen-activated protein kinase kinase 5 (448 aa).

Positions 18–25 (VIRIKIPN) are interaction with MAPK7. Residues 18 to 109 (VIRIKIPNSG…EPLQIFPRAC (92 aa)) enclose the PB1 domain. Residues 64-68 (DEDGD) form an interaction with MAP3K2/MAP3K3 region. Residues 116–144 (NIHGLKVNTRAGPSQHSSPAVSDSLPSNS) are disordered. Residues 117 to 131 (IHGLKVNTRAGPSQH) are interaction with MAPK7. Positions 126–144 (AGPSQHSSPAVSDSLPSNS) are enriched in polar residues. Positions 166–409 (IRYRDTLGHG…MRKQPKERPA (244 aa)) constitute a Protein kinase domain. Residues 172 to 180 (LGHGNGGTV) and Lys-195 each bind ATP. Asp-283 (proton acceptor) is an active-site residue. The residue at position 311 (Ser-311) is a Phosphoserine. Thr-315 bears the Phosphothreonine mark.

It belongs to the protein kinase superfamily. STE Ser/Thr protein kinase family. MAP kinase kinase subfamily. Interacts with PARD6A, MAP3K3 and MAPK7. Forms a complex with SQSTM1 and PRKCZ or PRKCI. In terms of assembly, (Microbial infection) Interacts with Yersinia YopJ. Requires Mg(2+) as cofactor. Activated by phosphorylation on Ser/Thr by MAP kinase kinase kinases. In terms of processing, (Microbial infection) Yersinia YopJ may acetylate Ser/Thr residues, preventing phosphorylation and activation, thus blocking the MAPK signaling pathway. In terms of tissue distribution, expressed in many adult tissues. Abundant in heart and skeletal muscle.

The enzyme catalyses L-seryl-[protein] + ATP = O-phospho-L-seryl-[protein] + ADP + H(+). The catalysed reaction is L-threonyl-[protein] + ATP = O-phospho-L-threonyl-[protein] + ADP + H(+). It catalyses the reaction L-tyrosyl-[protein] + ATP = O-phospho-L-tyrosyl-[protein] + ADP + H(+). Functionally, acts as a scaffold for the formation of a ternary MAP3K2/MAP3K3-MAP3K5-MAPK7 signaling complex. Activation of this pathway appears to play a critical role in protecting cells from stress-induced apoptosis, neuronal survival and cardiac development and angiogenesis. As part of the MAPK/ERK signaling pathway, acts as a negative regulator of apoptosis in cardiomyocytes via promotion of STUB1/CHIP-mediated ubiquitination and degradation of ICER-type isoforms of CREM. The sequence is that of Dual specificity mitogen-activated protein kinase kinase 5 (MAP2K5) from Homo sapiens (Human).